We begin with the raw amino-acid sequence, 249 residues long: Chromosome segregation and cytokinesis defective protein 1 (249 aa).

Positions 12–48 (VVAMADTLETRVKDLLEEYKKKLREVALQTAKAESDR) form a coiled coil. 3 disordered regions span residues 70–89 (PDDF…AAVA), 94–183 (LPSE…PEKP), and 208–249 (TTAT…GTSV). Positions 73-85 (FYIESGEEEEEGE) are enriched in acidic residues. Over residues 109–126 (QKTSIPIGQNSGRNTVQV) the composition is skewed to polar residues. The segment covering 224 to 236 (SGAASKKAAAAAG) has biased composition (low complexity).

Belongs to the borealin family. Highly divergent. Component of the CPC complex which consists of icp-1; csc-1; bir-1 and air-2. Within the complex interacts with Aurora B/air-2, bir-1 and icp-1.

It localises to the nucleus. It is found in the chromosome. The protein resides in the centromere. The protein localises to the cytoplasm. Its subcellular location is the cytoskeleton. It localises to the spindle. Its function is as follows. Component of the chromosomal passenger complex (CPC), a complex that acts as a key regulator of chromosome segregation and cytokinesis during mitosis. The CPC complex has essential functions at the centromere in ensuring correct chromosome alignment and segregation. In the complex, it may be required to direct the Aurora B/air-2 to centromeric DNA. The sequence is that of Chromosome segregation and cytokinesis defective protein 1 (csc-1) from Caenorhabditis elegans.